We begin with the raw amino-acid sequence, 37 residues long: Large ribosomal subunit protein bL36 (37 aa).

This sequence belongs to the bacterial ribosomal protein bL36 family.

The polypeptide is Large ribosomal subunit protein bL36 (Natranaerobius thermophilus (strain ATCC BAA-1301 / DSM 18059 / JW/NM-WN-LF)).